The following is a 168-amino-acid chain: MADPHIKSPMDFLDYLTVIIYRTGFVIAALAVLTVSWYPDLSLTFILIAATCCASSLHIYLKSFRLLFQFATWIGLLFYINHYPALALGGALLTLGGLCFKEYFCFRVPLLNLQPIFVACLWFSWVLNNLIALRIFSIISGVLLLVLAIQKWRMPLHFDIGDKTKYQI.

The next 5 helical transmembrane spans lie at 15-33 (YLTV…LAVL), 41-57 (LSLT…ASSL), 73-93 (WIGL…GALL), 108-128 (VPLL…WVLN), and 129-149 (NLIA…VLAI).

The protein localises to the cell membrane. This is an uncharacterized protein from Haemophilus influenzae (strain ATCC 51907 / DSM 11121 / KW20 / Rd).